Consider the following 21-residue polypeptide: C-phycocyanin alpha subunit (21 aa).

It belongs to the phycobiliprotein family. Heterodimer of an alpha and a beta subunit, which further assembles into trimers and the trimers into hexamers. In terms of processing, contains one covalently linked bilin chromophore.

It is found in the cellular thylakoid membrane. In terms of biological role, light-harvesting photosynthetic bile pigment-protein from the phycobiliprotein complex (phycobilisome, PBS). Phycocyanin is the major phycobiliprotein in the PBS rod. This chain is C-phycocyanin alpha subunit, found in Anabaena sp. (strain L31).